Here is a 132-residue protein sequence, read N- to C-terminus: Small ribosomal subunit protein uS8 (132 aa).

It belongs to the universal ribosomal protein uS8 family. Part of the 30S ribosomal subunit. Contacts proteins S5 and S12.

Functionally, one of the primary rRNA binding proteins, it binds directly to 16S rRNA central domain where it helps coordinate assembly of the platform of the 30S subunit. This is Small ribosomal subunit protein uS8 from Lactobacillus acidophilus (strain ATCC 700396 / NCK56 / N2 / NCFM).